The sequence spans 68 residues: U-actitoxin-Avt1 (68 aa).

A signal peptide spans 1-22; sequence MNSKAIISVFLIMLVVVSCTQA. The propeptide occupies 23–40; the sequence is TYETEDDDEPGPRHSEKR. Positions 24 to 50 are disordered; that stretch reads YETEDDDEPGPRHSEKRSCARGCGGDS. Basic and acidic residues predominate over residues 32–41; the sequence is PGPRHSEKRS. Disulfide bonds link C42–C54, C46–C59, and C52–C66.

Functionally, stable protein with probable toxin activity. Does not show activity on all channels tested. Shows no hemolytic activity on rat erythrocytes. In Aulactinia veratra (Green snakelock anemone), this protein is U-actitoxin-Avt1.